The sequence spans 325 residues: ATPase GET3 (325 aa).

Position 34 to 41 (34 to 41 (KGGVGKTT)) interacts with ATP. Aspartate 63 is an active-site residue. Residues glutamate 243 and asparagine 270 each contribute to the ATP site. Zn(2+)-binding residues include cysteine 281 and cysteine 284.

Belongs to the arsA ATPase family. In terms of assembly, homodimer.

The protein localises to the cytoplasm. Its subcellular location is the endoplasmic reticulum. Functionally, ATPase required for the post-translational delivery of tail-anchored (TA) proteins to the endoplasmic reticulum. Recognizes and selectively binds the transmembrane domain of TA proteins in the cytosol. This complex then targets to the endoplasmic reticulum by membrane-bound receptors, where the tail-anchored protein is released for insertion. This process is regulated by ATP binding and hydrolysis. ATP binding drives the homodimer towards the closed dimer state, facilitating recognition of newly synthesized TA membrane proteins. ATP hydrolysis is required for insertion. Subsequently, the homodimer reverts towards the open dimer state, lowering its affinity for the membrane-bound receptor, and returning it to the cytosol to initiate a new round of targeting. In Coccidioides posadasii (strain C735) (Valley fever fungus), this protein is ATPase GET3.